The sequence spans 400 residues: F-box/kelch-repeat protein At4g19870 (400 aa).

Residues 1-10 (MKRQAKPPEK) are compositionally biased toward basic and acidic residues. The tract at residues 1–33 (MKRQAKPPEKKTKRTTNASSPTPSSSSPSLSSL) is disordered. Over residues 19–33 (SSPTPSSSSPSLSSL) the composition is skewed to low complexity. In terms of domain architecture, F-box spans 27 to 73 (SPSLSSLPDEIVENCLARISRSYYPTLSIVSKSFRSIISSTELYVAR). 3 Kelch repeats span residues 146–192 (EIYV…LYDG), 194–240 (IYVI…RIAE), and 242–284 (EGKI…SVLY).

The sequence is that of F-box/kelch-repeat protein At4g19870 from Arabidopsis thaliana (Mouse-ear cress).